The following is a 691-amino-acid chain: Protein simr-1 (691 aa).

A Tudor; degenerate domain is found at 139–204 (EAEITPGTIY…TLFHLGKFTI (66 aa)). 2 disordered regions span residues 547–573 (TGPC…DMSI) and 588–618 (DNLN…TTNS). Composition is skewed to polar residues over residues 549 to 573 (PCGS…DMSI) and 588 to 598 (DNLNDTENWPN).

The protein localises to the cytoplasm. Its subcellular location is the perinuclear region. In terms of biological role, acts downstream of piRNA production to promote mediator complex-dependent endogenous siRNA biogenesis from piRNA-target mRNAs in the RNA interference pathway in germ cells. Not required to identify target mRNA by the piRNA pathway. Plays a role in both spermatogenesis and oogenesis and in maintaining fertility over multiple generations, probably by directing mutator-dependent silencing to piRNA-targeted genes. The protein is Protein simr-1 of Caenorhabditis elegans.